The primary structure comprises 447 residues: Methylenetetrahydrofolate--tRNA-(uracil-5-)-methyltransferase TrmFO (447 aa).

13–18 is a binding site for FAD; sequence GAGLAG.

Belongs to the MnmG family. TrmFO subfamily. It depends on FAD as a cofactor.

It is found in the cytoplasm. The enzyme catalyses uridine(54) in tRNA + (6R)-5,10-methylene-5,6,7,8-tetrahydrofolate + NADH + H(+) = 5-methyluridine(54) in tRNA + (6S)-5,6,7,8-tetrahydrofolate + NAD(+). It catalyses the reaction uridine(54) in tRNA + (6R)-5,10-methylene-5,6,7,8-tetrahydrofolate + NADPH + H(+) = 5-methyluridine(54) in tRNA + (6S)-5,6,7,8-tetrahydrofolate + NADP(+). In terms of biological role, catalyzes the folate-dependent formation of 5-methyl-uridine at position 54 (M-5-U54) in all tRNAs. The sequence is that of Methylenetetrahydrofolate--tRNA-(uracil-5-)-methyltransferase TrmFO from Streptococcus thermophilus (strain CNRZ 1066).